Here is an 841-residue protein sequence, read N- to C-terminus: MAP7 domain-containing protein 1 (841 aa).

Disordered stretches follow at residues 1 to 151 (MESG…ERAK) and 184 to 208 (EQRL…EKNK). Pro residues predominate over residues 22-52 (PPEPRPSPEGDPSPPPPPMSALVPDTPPDTP). Residues Thr47 and Thr51 each carry the phosphothreonine modification. Phosphoserine is present on residues Ser70, Ser86, and Ser93. A Phosphothreonine modification is found at Thr97. Phosphoserine occurs at positions 113 and 116. The residue at position 118 (Thr118) is a Phosphothreonine. Ser123 and Ser125 each carry phosphoserine. Residues 128 to 222 (TKQEVKKAGE…AAIQRSVKKT (95 aa)) adopt a coiled-coil conformation. The segment covering 130 to 151 (QEVKKAGERHKLAKERREERAK) has biased composition (basic and acidic residues). A phosphoserine mark is found at Ser254, Ser273, Ser313, Ser366, and Ser399. The segment at 316-813 (TLPRNGRDQG…PSGDKSLSRT (498 aa)) is disordered. The segment covering 365–377 (ASASPLTPCSVTR) has biased composition (polar residues). Positions 405-435 (RRPEASPVQKKEKKDKERENEKEKSALARER) are enriched in basic and acidic residues. A coiled-coil region spans residues 412–441 (VQKKEKKDKERENEKEKSALARERSLKKRQ). Phosphoserine occurs at positions 442, 446, 452, 454, and 460. Positions 460-473 (SPKSKARPSSPSTS) are enriched in low complexity. Residue Lys462 forms a Glycyl lysine isopeptide (Lys-Gly) (interchain with G-Cter in SUMO2) linkage. Ser479 and Ser496 each carry phosphoserine. The segment covering 479 to 497 (SPCPSPGPGHTLPPKPPSP) has biased composition (pro residues). The span at 523–539 (PEDKSQSKRRASNEKES) shows a compositional bias: basic and acidic residues. Phosphoserine occurs at positions 544, 548, and 552. Over residues 544 to 561 (SPAPSPAPSPTPAPPQKE) the composition is skewed to pro residues. Thr554 is modified (phosphothreonine). Low complexity predominate over residues 562–576 (QPPAETPTDAAVLTS). Over residues 577 to 586 (PPAPAPPVTP) the composition is skewed to pro residues. The stretch at 593–721 (TTDREEATRL…LEEIMKRTRK (129 aa)) forms a coiled coil. Residues 594-735 (TDREEATRLL…ETKQKQDSKE (142 aa)) show a composition bias toward basic and acidic residues. 2 positions are modified to phosphoserine: Ser742 and Ser753. Residues Thr813 and Thr816 each carry the phosphothreonine modification. Position 834 is a phosphoserine (Ser834).

The protein belongs to the MAP7 family.

The protein localises to the cytoplasm. The protein resides in the cytoskeleton. It localises to the spindle. It is found in the microtubule organizing center. Its subcellular location is the centrosome. The protein localises to the midbody. Its function is as follows. Microtubule-stabilizing protein involved in the control of cell motility and neurite outgrowth. Facilitate microtubule stabilization through the maintenance of acetylated stable microtubules. The polypeptide is MAP7 domain-containing protein 1 (MAP7D1) (Homo sapiens (Human)).